The sequence spans 347 residues: Toluene-4-sulfonate monooxygenase system iron-sulfur subunit TsaM1 (347 aa).

The Rieske domain maps to W7–I109. 4 residues coordinate [2Fe-2S] cluster: C48, H50, C67, and H70.

Homotetramer. Part of the p-toluenesulfonate methyl-monooxygenase complex TsaBM, comprising the reductase TsaB and the oxygenase TsaM. It depends on [2Fe-2S] cluster as a cofactor.

It catalyses the reaction toluene-4-sulfonate + NADH + O2 + H(+) = 4-(hydroxymethyl)benzenesulfonate + NAD(+) + H2O. Involved in the toluene-4-sulfonate degradation pathway. Does not discriminate between the sulfonate and the carboxyl substituents and can also be involved in the p-toluenecarboxylate degradation pathway. Can use toluene-4-sulfonate, p-toluate, m-toluate and 4-ethylbenzoate as substrates, but not p-xylene, toluene and p-cresol. Also catalyzes the demethylation of 4-methoxybenzoate to 4-hydroxybenzoate. This chain is Toluene-4-sulfonate monooxygenase system iron-sulfur subunit TsaM1 (tsaM1), found in Comamonas testosteroni (Pseudomonas testosteroni).